The sequence spans 197 residues: Ycf20-like protein (197 aa).

The next 3 helical transmembrane spans lie at 113–133 (MKIFLLLLGFYTANALATILG), 138–158 (WDVLVAGIVVAAIEGIGMLMY), and 173–193 (FVVFMNFWKAGVCLGLFVDAF).

This sequence belongs to the ycf20 family.

It localises to the membrane. The sequence is that of Ycf20-like protein from Arabidopsis thaliana (Mouse-ear cress).